A 707-amino-acid chain; its full sequence is F-box/WD repeat-containing protein 7 (707 aa).

The disordered stretch occupies residues 1 to 151 (MNQELLSVGS…SVTNSSSIVD (151 aa)). S26 is subject to Phosphoserine; by ATM. The segment covering 57 to 68 (GEVVGVEPRPGG) has biased composition (low complexity). The segment covering 69-84 (QNDSQQGQLEENNNRF) has biased composition (polar residues). Residues 87-129 (VDEDSSGNQEEQEEDEEHAGEQDEEDEEEEEMDQESDDFDQSD) show a composition bias toward acidic residues. Residues 130-139 (DSSREDEHTH) are compositionally biased toward basic and acidic residues. T205 carries the phosphothreonine modification. S227 is subject to Phosphoserine; by SGK1. The 47-residue stretch at 278–324 (RDFISLLPKELALYVLSFLEPKDLLQAAQTCRYWRILAEDNLLWREK) folds into the F-box domain. 7 WD repeats span residues 378–418 (GHDD…RTLV), 420–456 (HTGG…CIHT), 459–498 (GHTS…HVLM), 500–536 (HVAA…CLHT), 539–578 (GHTN…HTLT), 580–618 (HQSL…QTLQ), and 622–659 (KHQS…FIRN).

As to quaternary structure, homodimer; homodimerization plays a role in substrate binding and/or ubiquitination and degradation. Component of the SCF(FBXW7) complex consisting of CUL1, RBX1, SKP1 and FBXW7. Interacts (via F-box domain) with SKP1. Interacts (via F-box domain) with pseudophosphatase STYX; the interaction is direct and prevents FBXW7 interaction with SKP1. Interacts with cyclin-E (CCNE1 or CCNE2). Interacts with PSEN1. Forms a trimeric complex with NOTCH1 and SGK1. Interacts with NOTCH1 intracellular domain/NICD and NOTCH4 intracellular domain/NICD. Interacts with NOTCH2 intracellular domain (N2ICD). Interacts with MYC (when phosphorylated). Interacts with USP28, counteracting ubiquitination of MYC. Interacts with JUN. Found in a complex with JUN and PRR7. Interacts with JUN and PRR7; the interaction inhibits ubiquitination-mediated JUN degradation, promoting its phosphorylation and transcriptional activity. Interacts (when phosphorylated at Thr-205) with PIN1, disrupting FBXW7 dimerization and promoting FBXW7 autoubiquitination and degradation. Interacts with UBE2QL1. Interacts with FAM83D; promotes FBXW7 degradation. Interacts with MYCN; FBXW7 competes with AURKA for binding to unphosphorylated MYCN but not for binding to phosphorylated MYCN. Interacts with STOML1. Interacts with NFE2L1. Interacts with USP36, counteracting ubiquitination of MYC. Interacts with NR1D1. Interacts with RICTOR; mediates RICTOR ubiquitination and degradation. Interacts with USP38, counteracting ubiquitination of MYC. In terms of assembly, (Microbial infection) Interacts (via WD repeats) with SV40 large T antigen (via CPD region). Post-translationally, phosphorylation at Thr-205 promotes interaction with PIN1, leading to disrupt FBXW7 dimerization and promoting FBXW7 autoubiquitination and degradation. Phosphorylated by ATM at Ser-26 in response to DNA damage, promoting recruitment to DNA damage sites and 'Lys-63'-linked ubiquitination of phosphorylated XRCC4. Ubiquitinated: autoubiquitinates following phosphorylation at Thr-205 and subsequent interaction with PIN1. Ubiquitination leads to its proteasomal degradation. Widely expressed. As to expression, expressed in brain.

The protein localises to the nucleus. Its subcellular location is the nucleoplasm. It is found in the chromosome. The protein resides in the cytoplasm. It localises to the nucleolus. It functions in the pathway protein modification; protein ubiquitination. Its function is as follows. Substrate recognition component of a SCF (SKP1-CUL1-F-box protein) E3 ubiquitin-protein ligase complex which mediates the ubiquitination and subsequent proteasomal degradation of target proteins. Recognizes and binds phosphorylated sites/phosphodegrons within target proteins and thereafter brings them to the SCF complex for ubiquitination. Identified substrates include cyclin-E (CCNE1 or CCNE2), DISC1, JUN, MYC, NOTCH1 released notch intracellular domain (NICD), NFE2L1, NOTCH2, MCL1, MLST8, RICTOR, and probably PSEN1. Acts as a negative regulator of JNK signaling by binding to phosphorylated JUN and promoting its ubiquitination and subsequent degradation. Involved in bone homeostasis and negative regulation of osteoclast differentiation. Regulates the amplitude of the cyclic expression of hepatic core clock genes and genes involved in lipid and glucose metabolism via ubiquitination and proteasomal degradation of their transcriptional repressor NR1D1; CDK1-dependent phosphorylation of NR1D1 is necessary for SCF(FBXW7)-mediated ubiquitination. Also able to promote 'Lys-63'-linked ubiquitination in response to DNA damage. The SCF(FBXW7) complex facilitates double-strand break repair following phosphorylation by ATM: phosphorylation promotes localization to sites of double-strand breaks and 'Lys-63'-linked ubiquitination of phosphorylated XRCC4, enhancing DNA non-homologous end joining. This Homo sapiens (Human) protein is F-box/WD repeat-containing protein 7.